A 176-amino-acid chain; its full sequence is ATP-dependent protease subunit HslV (176 aa).

Thr-2 is an active-site residue. The Na(+) site is built by Gly-157, Cys-160, and Thr-163.

It belongs to the peptidase T1B family. HslV subfamily. As to quaternary structure, a double ring-shaped homohexamer of HslV is capped on each side by a ring-shaped HslU homohexamer. The assembly of the HslU/HslV complex is dependent on binding of ATP.

The protein resides in the cytoplasm. The catalysed reaction is ATP-dependent cleavage of peptide bonds with broad specificity.. Its activity is regulated as follows. Allosterically activated by HslU binding. In terms of biological role, protease subunit of a proteasome-like degradation complex believed to be a general protein degrading machinery. The protein is ATP-dependent protease subunit HslV of Pectobacterium atrosepticum (strain SCRI 1043 / ATCC BAA-672) (Erwinia carotovora subsp. atroseptica).